Consider the following 379-residue polypeptide: Cytochrome b (379 aa).

4 helical membrane passes run 33–53 (FGSLLGMCLMIQILTGLFLAM), 77–98 (WLIRYLHANGASMFFICLFIHV), 113–133 (WNIGIILFLMTMATAFVGYVL), and 178–198 (FFAFHFILPFIIAAFALVHLL). 2 residues coordinate heme b: His83 and His97. Heme b is bound by residues His182 and His196. His201 serves as a coordination point for a ubiquinone. 4 helical membrane passes run 226 to 246 (TKDLLGIFLLLLVLMILALFF), 288 to 308 (LGGVLALVLSILILAAFPLLN), 320 to 340 (VTQVIYWIFIANLLVLTWIGG), and 347 to 367 (FTMIGQIASITYFAIITILMP).

Belongs to the cytochrome b family. In terms of assembly, the cytochrome bc1 complex contains 11 subunits: 3 respiratory subunits (MT-CYB, CYC1 and UQCRFS1), 2 core proteins (UQCRC1 and UQCRC2) and 6 low-molecular weight proteins (UQCRH/QCR6, UQCRB/QCR7, UQCRQ/QCR8, UQCR10/QCR9, UQCR11/QCR10 and a cleavage product of UQCRFS1). This cytochrome bc1 complex then forms a dimer. Heme b serves as cofactor.

It localises to the mitochondrion inner membrane. Component of the ubiquinol-cytochrome c reductase complex (complex III or cytochrome b-c1 complex) that is part of the mitochondrial respiratory chain. The b-c1 complex mediates electron transfer from ubiquinol to cytochrome c. Contributes to the generation of a proton gradient across the mitochondrial membrane that is then used for ATP synthesis. The sequence is that of Cytochrome b (MT-CYB) from Akodon fumeus (Smoky grass mouse).